The following is a 291-amino-acid chain: RPE-retinal G protein-coupled receptor (291 aa).

Topologically, residues methionine 1–glutamate 15 are extracellular. The chain crosses the membrane as a helical span at residues valine 16–leucine 36. The Cytoplasmic segment spans residues threonine 37–histidine 52. A helical transmembrane segment spans residues leucine 53–alanine 73. At threonine 74–histidine 91 the chain is on the extracellular side. A disulfide bridge links cysteine 88 with cysteine 162. Residues glycine 92 to glycine 112 form a helical membrane-spanning segment. Topologically, residues arginine 113–serine 130 are cytoplasmic. Residues leucine 131–glycine 151 traverse the membrane as a helical segment. Residues histidine 152 to serine 175 lie on the Extracellular side of the membrane. Residue asparagine 172 is glycosylated (N-linked (GlcNAc...) asparagine). Residues phenylalanine 176 to tyrosine 196 traverse the membrane as a helical segment. Residues serine 197–threonine 219 are Cytoplasmic-facing. Residues leucine 220–threonine 240 traverse the membrane as a helical segment. Residues serine 241–glutamine 247 lie on the Extracellular side of the membrane. Residues methionine 248 to glycine 268 form a helical membrane-spanning segment. Residue lysine 255 is modified to N6-(retinylidene)lysine. Residues asparagine 269–lysine 291 lie on the Cytoplasmic side of the membrane.

Belongs to the G-protein coupled receptor 1 family. Opsin subfamily. Post-translationally, covalently binds all-trans- and 11-cis-retinal. In terms of tissue distribution, preferentially expressed at high levels in the retinal pigment epithelium (RPE) and Mueller cells of the neural retina.

The protein resides in the membrane. Functionally, receptor for all-trans- and 11-cis-retinal. Binds preferentially to the former and may catalyze the isomerization of the chromophore by a retinochrome-like mechanism. The protein is RPE-retinal G protein-coupled receptor (RGR) of Homo sapiens (Human).